A 364-amino-acid polypeptide reads, in one-letter code: DNA polymerase IV (364 aa).

Positions 14 to 198 (IIHIDMDAFF…LPIEKFHGVG (185 aa)) constitute a UmuC domain. Positions 18 and 116 each coordinate Mg(2+). E117 is a catalytic residue.

It belongs to the DNA polymerase type-Y family. Monomer. Requires Mg(2+) as cofactor.

The protein localises to the cytoplasm. It carries out the reaction DNA(n) + a 2'-deoxyribonucleoside 5'-triphosphate = DNA(n+1) + diphosphate. In terms of biological role, poorly processive, error-prone DNA polymerase involved in untargeted mutagenesis. Copies undamaged DNA at stalled replication forks, which arise in vivo from mismatched or misaligned primer ends. These misaligned primers can be extended by PolIV. Exhibits no 3'-5' exonuclease (proofreading) activity. May be involved in translesional synthesis, in conjunction with the beta clamp from PolIII. This is DNA polymerase IV from Streptococcus pyogenes serotype M5 (strain Manfredo).